The following is a 159-amino-acid chain: NAD(P)H-quinone oxidoreductase subunit J, chloroplastic (159 aa).

This sequence belongs to the complex I 30 kDa subunit family. In terms of assembly, NDH is composed of at least 16 different subunits, 5 of which are encoded in the nucleus.

It localises to the plastid. Its subcellular location is the chloroplast thylakoid membrane. The catalysed reaction is a plastoquinone + NADH + (n+1) H(+)(in) = a plastoquinol + NAD(+) + n H(+)(out). It catalyses the reaction a plastoquinone + NADPH + (n+1) H(+)(in) = a plastoquinol + NADP(+) + n H(+)(out). Functionally, NDH shuttles electrons from NAD(P)H:plastoquinone, via FMN and iron-sulfur (Fe-S) centers, to quinones in the photosynthetic chain and possibly in a chloroplast respiratory chain. The immediate electron acceptor for the enzyme in this species is believed to be plastoquinone. Couples the redox reaction to proton translocation, and thus conserves the redox energy in a proton gradient. The polypeptide is NAD(P)H-quinone oxidoreductase subunit J, chloroplastic (Brachypodium distachyon (Purple false brome)).